The sequence spans 218 residues: Adenylate kinase (218 aa).

10-15 (GAGKGT) is a binding site for ATP. An NMP region spans residues 30–59 (STGDMIRETIKSGSVLGQELKKVLDAGELV). Residues Thr-31, Arg-36, 57 to 59 (ELV), and Gln-92 contribute to the AMP site. The tract at residues 122-159 (GRRIHPASGRTYHTKFNPPKVADKDDVTGEPLITRTDD) is LID. ATP contacts are provided by residues Arg-123 and 132–133 (TY). Arg-156 and Arg-167 together coordinate AMP. Residue Gln-202 participates in ATP binding.

The protein belongs to the adenylate kinase family. As to quaternary structure, monomer.

It is found in the cytoplasm. It catalyses the reaction AMP + ATP = 2 ADP. It functions in the pathway purine metabolism; AMP biosynthesis via salvage pathway; AMP from ADP: step 1/1. Catalyzes the reversible transfer of the terminal phosphate group between ATP and AMP. Plays an important role in cellular energy homeostasis and in adenine nucleotide metabolism. The protein is Adenylate kinase of Francisella tularensis subsp. holarctica (strain LVS).